Reading from the N-terminus, the 583-residue chain is Membrane protein insertase YidC (583 aa).

A helical transmembrane segment spans residues 5 to 25 (SVTGLALIALIMIVWLQFMSP). The segment at 28-50 (KSVQPDNRPKAQTTATVSQEKTE) is disordered. The segment covering 37–46 (KAQTTATVSQ) has biased composition (polar residues). Helical transmembrane passes span 341–361 (PFAEYVILPVFTWMNGFISNY), 362–382 (GLIIIIFALLIKLVTYPLSMA), 427–447 (LGGCLPVVLQMPLLFAMFYVF), 477–497 (IPVYGDHIAVFPILMGVTVFI), and 515–535 (LYIFPVTMLLFFNNLPAGLGL).

It belongs to the OXA1/ALB3/YidC family. Type 1 subfamily. In terms of assembly, interacts with the Sec translocase complex via SecD. Specifically interacts with transmembrane segments of nascent integral membrane proteins during membrane integration.

It is found in the cell inner membrane. Functionally, required for the insertion and/or proper folding and/or complex formation of integral membrane proteins into the membrane. Involved in integration of membrane proteins that insert both dependently and independently of the Sec translocase complex, as well as at least some lipoproteins. Aids folding of multispanning membrane proteins. The protein is Membrane protein insertase YidC of Chlorobium limicola (strain DSM 245 / NBRC 103803 / 6330).